A 134-amino-acid chain; its full sequence is Small ribosomal subunit protein uS9 (134 aa).

Residues 114–134 (QKESKNFGGPGARAKYQKSYR) form a disordered region.

This sequence belongs to the universal ribosomal protein uS9 family.

This chain is Small ribosomal subunit protein uS9, found in Methanosarcina acetivorans (strain ATCC 35395 / DSM 2834 / JCM 12185 / C2A).